The sequence spans 607 residues: Glutamine--fructose-6-phosphate aminotransferase [isomerizing] (607 aa).

The active-site Nucleophile; for GATase activity is the Cys-2. The 216-residue stretch at 2–217 (CGIIGIIGND…DGDWAVLTRN (216 aa)) folds into the Glutamine amidotransferase type-2 domain. SIS domains are found at residues 283-422 (IGID…ARGA) and 455-597 (VCHD…VDQP). The active-site For Fru-6P isomerization activity is the Lys-602.

As to quaternary structure, homodimer.

It is found in the cytoplasm. The enzyme catalyses D-fructose 6-phosphate + L-glutamine = D-glucosamine 6-phosphate + L-glutamate. In terms of biological role, catalyzes the first step in hexosamine metabolism, converting fructose-6P into glucosamine-6P using glutamine as a nitrogen source. In Brucella melitensis biotype 1 (strain ATCC 23456 / CCUG 17765 / NCTC 10094 / 16M), this protein is Glutamine--fructose-6-phosphate aminotransferase [isomerizing].